We begin with the raw amino-acid sequence, 1387 residues long: DNA-directed RNA polymerase subunit beta' (1387 aa).

Residues Cys70, Cys72, Cys85, and Cys88 each coordinate Zn(2+). 3 residues coordinate Mg(2+): Asp461, Asp463, and Asp465. Cys808, Cys882, Cys889, and Cys892 together coordinate Zn(2+). A disordered region spans residues 1367-1387 (QDEAKGVGQETPRLSGQEAAE).

Belongs to the RNA polymerase beta' chain family. In terms of assembly, the RNAP catalytic core consists of 2 alpha, 1 beta, 1 beta' and 1 omega subunit. When a sigma factor is associated with the core the holoenzyme is formed, which can initiate transcription. It depends on Mg(2+) as a cofactor. Zn(2+) is required as a cofactor.

The enzyme catalyses RNA(n) + a ribonucleoside 5'-triphosphate = RNA(n+1) + diphosphate. DNA-dependent RNA polymerase catalyzes the transcription of DNA into RNA using the four ribonucleoside triphosphates as substrates. This Granulibacter bethesdensis (strain ATCC BAA-1260 / CGDNIH1) protein is DNA-directed RNA polymerase subunit beta'.